A 138-amino-acid chain; its full sequence is Nucleoside diphosphate kinase (138 aa).

6 residues coordinate ATP: Lys9, Phe57, Arg85, Thr91, Arg102, and Asn112. The Pros-phosphohistidine intermediate role is filled by His120.

This sequence belongs to the NDK family. Homotetramer. The cofactor is Mg(2+).

It is found in the cytoplasm. It catalyses the reaction a 2'-deoxyribonucleoside 5'-diphosphate + ATP = a 2'-deoxyribonucleoside 5'-triphosphate + ADP. The enzyme catalyses a ribonucleoside 5'-diphosphate + ATP = a ribonucleoside 5'-triphosphate + ADP. Functionally, major role in the synthesis of nucleoside triphosphates other than ATP. The ATP gamma phosphate is transferred to the NDP beta phosphate via a ping-pong mechanism, using a phosphorylated active-site intermediate. This Streptococcus agalactiae serotype III (strain NEM316) protein is Nucleoside diphosphate kinase.